The chain runs to 341 residues: L-threonine 3-dehydrogenase (341 aa).

Residue Cys38 coordinates Zn(2+). Catalysis depends on charge relay system residues Thr40 and His43. Residues His63, Glu64, Cys93, Cys96, Cys99, and Cys107 each coordinate Zn(2+). Residues Ile175, Asp195, Arg200, 262–264 (LGI), and 286–287 (IY) contribute to the NAD(+) site.

This sequence belongs to the zinc-containing alcohol dehydrogenase family. Homotetramer. It depends on Zn(2+) as a cofactor.

The protein resides in the cytoplasm. The enzyme catalyses L-threonine + NAD(+) = (2S)-2-amino-3-oxobutanoate + NADH + H(+). Its pathway is amino-acid degradation; L-threonine degradation via oxydo-reductase pathway; glycine from L-threonine: step 1/2. Functionally, catalyzes the NAD(+)-dependent oxidation of L-threonine to 2-amino-3-ketobutyrate. The sequence is that of L-threonine 3-dehydrogenase from Shewanella loihica (strain ATCC BAA-1088 / PV-4).